The chain runs to 197 residues: dITP/XTP pyrophosphatase (197 aa).

Substrate is bound at residue 8-13 (TGNPGK). 2 residues coordinate Mg(2+): glutamate 40 and aspartate 69. The active-site Proton acceptor is aspartate 69. Substrate contacts are provided by residues serine 70, 154 to 157 (FGYD), lysine 177, and 182 to 183 (HR).

The protein belongs to the HAM1 NTPase family. As to quaternary structure, homodimer. Mg(2+) is required as a cofactor.

The catalysed reaction is XTP + H2O = XMP + diphosphate + H(+). It catalyses the reaction dITP + H2O = dIMP + diphosphate + H(+). It carries out the reaction ITP + H2O = IMP + diphosphate + H(+). Pyrophosphatase that catalyzes the hydrolysis of nucleoside triphosphates to their monophosphate derivatives, with a high preference for the non-canonical purine nucleotides XTP (xanthosine triphosphate), dITP (deoxyinosine triphosphate) and ITP. Seems to function as a house-cleaning enzyme that removes non-canonical purine nucleotides from the nucleotide pool, thus preventing their incorporation into DNA/RNA and avoiding chromosomal lesions. This Yersinia pseudotuberculosis serotype I (strain IP32953) protein is dITP/XTP pyrophosphatase.